The sequence spans 325 residues: Zinc metalloproteinase/disintegrin (325 aa).

Residues 1–39 constitute a propeptide that is removed on maturation; the sequence is KYENVEKGDEAPKKCGVTHTNLESDEPIEKASQLFGTSE. The residue at position 40 (Gln40) is a Pyrrolidone carboxylic acid. One can recognise a Peptidase M12B domain in the interval 46-242; the sequence is RHIELVIVAD…HNPQRILNEP (197 aa). His182 contributes to the Zn(2+) binding site. Glu183 is an active-site residue. Zn(2+)-binding residues include His186 and His192. Disulfide bonds link Cys197–Cys221 and Cys199–Cys204. The propeptide occupies 243-257; that stretch reads LRTDTVSTPVYGNVL. The 73-residue stretch at 250–322 folds into the Disintegrin domain; the sequence is TPVYGNVLQN…SECESNPWNF (73 aa). Gln258 carries the post-translational modification Pyrrolidone carboxylic acid. 4 disulfide bridges follow: Cys264/Cys287, Cys278/Cys284, Cys283/Cys308, and Cys296/Cys315. The Cell attachment site motif lies at 300-302; sequence RGD.

Belongs to the venom metalloproteinase (M12B) family. P-II subfamily. P-IIe sub-subfamily. Heterodimer of bitisgabonin and gabonin-1 (bitisgabonin-1) or gabonin-2 (bitisgabonin-2); disulfide-linked. Zn(2+) serves as cofactor. In terms of tissue distribution, expressed by the venom gland.

The protein resides in the secreted. In terms of biological role, impairs hemostasis in the envenomed animal. In dimer with gabonin-1 (bitisgabonin-1), is a potent inhibitor of the adhesion of the RGD-dependent integrin alpha-5/beta-1 (ITGA5/ITGB1) to immobilized fibronectin. Functionally, in dimer with gabonin-2 (bitisgabonin-2), preferentially inhibits the adhesion of the alpha-4/beta-1 (ITGA4/ITGB1) and alpha-9/beta-1 (ITGA9/ITGB1) integrins to VCAM-1 and also acts as a strong antagonist of alpha-5/beta-1 (ITGA5/ITGB1). The sequence is that of Zinc metalloproteinase/disintegrin from Bitis gabonica (Gaboon adder).